The chain runs to 207 residues: Small ribosomal subunit protein uS4 (207 aa).

Residues 31 to 55 (KCKLDSKPGQHGRTSGARTSDYGTQ) form a disordered region. Residues 42 to 53 (GRTSGARTSDYG) show a composition bias toward polar residues. One can recognise an S4 RNA-binding domain in the interval 97-160 (SRLDNVVYRM…KKQARIVEAL (64 aa)).

Belongs to the universal ribosomal protein uS4 family. In terms of assembly, part of the 30S ribosomal subunit. Contacts protein S5. The interaction surface between S4 and S5 is involved in control of translational fidelity.

In terms of biological role, one of the primary rRNA binding proteins, it binds directly to 16S rRNA where it nucleates assembly of the body of the 30S subunit. Functionally, with S5 and S12 plays an important role in translational accuracy. This chain is Small ribosomal subunit protein uS4, found in Burkholderia ambifaria (strain ATCC BAA-244 / DSM 16087 / CCUG 44356 / LMG 19182 / AMMD) (Burkholderia cepacia (strain AMMD)).